We begin with the raw amino-acid sequence, 490 residues long: Protein nucleotidyltransferase YdiU (490 aa).

Gly92, Gly94, Arg95, Lys114, Asp126, Gly127, Arg177, and Arg184 together coordinate ATP. Asp256 acts as the Proton acceptor in catalysis. Residues Asn257 and Asp266 each contribute to the Mg(2+) site. Asp266 lines the ATP pocket.

It belongs to the SELO family. The cofactor is Mg(2+). Mn(2+) is required as a cofactor.

The catalysed reaction is L-seryl-[protein] + ATP = 3-O-(5'-adenylyl)-L-seryl-[protein] + diphosphate. It carries out the reaction L-threonyl-[protein] + ATP = 3-O-(5'-adenylyl)-L-threonyl-[protein] + diphosphate. It catalyses the reaction L-tyrosyl-[protein] + ATP = O-(5'-adenylyl)-L-tyrosyl-[protein] + diphosphate. The enzyme catalyses L-histidyl-[protein] + UTP = N(tele)-(5'-uridylyl)-L-histidyl-[protein] + diphosphate. The catalysed reaction is L-seryl-[protein] + UTP = O-(5'-uridylyl)-L-seryl-[protein] + diphosphate. It carries out the reaction L-tyrosyl-[protein] + UTP = O-(5'-uridylyl)-L-tyrosyl-[protein] + diphosphate. In terms of biological role, nucleotidyltransferase involved in the post-translational modification of proteins. It can catalyze the addition of adenosine monophosphate (AMP) or uridine monophosphate (UMP) to a protein, resulting in modifications known as AMPylation and UMPylation. The sequence is that of Protein nucleotidyltransferase YdiU from Bordetella avium (strain 197N).